The primary structure comprises 534 residues: CTP synthase (534 aa).

An amidoligase domain region spans residues 1-267 (MTKYIFVTGG…DQIVCDHLKL (267 aa)). A CTP-binding site is contributed by S13. Residue S13 coordinates UTP. 14 to 19 (SIGKGI) contacts ATP. Residue Y54 coordinates L-glutamine. An ATP-binding site is contributed by D71. Mg(2+) is bound by residues D71 and E141. CTP-binding positions include 148–150 (DIE), 188–193 (KTKPTQ), and K224. Residues 188 to 193 (KTKPTQ) and K224 contribute to the UTP site. Position 240–242 (240–242 (RDV)) interacts with ATP. A Glutamine amidotransferase type-1 domain is found at 292 to 534 (KIALVGKYVE…FVTAAIKNSN (243 aa)). An L-glutamine-binding site is contributed by G354. C381 functions as the Nucleophile; for glutamine hydrolysis in the catalytic mechanism. L-glutamine-binding positions include 382–385 (LGMQ), E405, and R463. Active-site residues include H508 and E510.

The protein belongs to the CTP synthase family. As to quaternary structure, homotetramer.

It catalyses the reaction UTP + L-glutamine + ATP + H2O = CTP + L-glutamate + ADP + phosphate + 2 H(+). The enzyme catalyses L-glutamine + H2O = L-glutamate + NH4(+). It carries out the reaction UTP + NH4(+) + ATP = CTP + ADP + phosphate + 2 H(+). It functions in the pathway pyrimidine metabolism; CTP biosynthesis via de novo pathway; CTP from UDP: step 2/2. With respect to regulation, allosterically activated by GTP, when glutamine is the substrate; GTP has no effect on the reaction when ammonia is the substrate. The allosteric effector GTP functions by stabilizing the protein conformation that binds the tetrahedral intermediate(s) formed during glutamine hydrolysis. Inhibited by the product CTP, via allosteric rather than competitive inhibition. Its function is as follows. Catalyzes the ATP-dependent amination of UTP to CTP with either L-glutamine or ammonia as the source of nitrogen. Regulates intracellular CTP levels through interactions with the four ribonucleotide triphosphates. The chain is CTP synthase from Streptococcus pyogenes serotype M18 (strain MGAS8232).